Here is a 71-residue protein sequence, read N- to C-terminus: Gas vesicle protein A (71 aa).

Residues 12-22 form an alpha helix 1 region; sequence LAEVIDRILDK. The segment at 23–32 is beta-strand 1; it reads GIVIDAWVRV. The tract at residues 33-36 is beta turn; sequence SLVG. The segment at 37-46 is beta-strand 2; sequence IELLAIEARI. The segment at 47-70 is alpha helix 2; sequence VIASVETYLKYAEAVGLTQSAAVP.

It belongs to the gas vesicle GvpA family. The gas vesicle shell is 2 nm thick and consists of a single layer of this protein. It forms helical ribs nearly perpendicular to the long axis of the vesicle.

It is found in the gas vesicle shell. Functionally, gas vesicles (GV) are hollow, gas filled proteinaceous nanostructures found in some microorganisms. During planktonic growth they allow positioning of the organism at a favorable depth for light or nutrient acquisition. GVs are highly permeable to gas. GvpA forms the protein shell. The ratio of GvpA:GvpC is estimated to be 33:1 and more recently 25:1. The chain is Gas vesicle protein A from Dolichospermum flosaquae (Anabaena flos-aquae).